We begin with the raw amino-acid sequence, 313 residues long: PDZ domain-containing protein GIPC2 (313 aa).

Residues 14 to 27 (KETSRLVEGEHTDA) show a composition bias toward basic and acidic residues. Residues 14–34 (KETSRLVEGEHTDAAVRSLPS) are disordered. Positions 117–197 (EVNVYKSEDS…EELFTLTLIE (81 aa)) constitute a PDZ domain.

This sequence belongs to the GIPC family. In terms of assembly, probably interacts with SEMA5A.

Its subcellular location is the cytoplasm. This Bos taurus (Bovine) protein is PDZ domain-containing protein GIPC2 (GIPC2).